We begin with the raw amino-acid sequence, 165 residues long: UBA-like domain-containing protein 2-B (165 aa).

Residues 119-165 (QQPVWLPPASPTAHLHHHHHHPQPVWPPNSQPTGGPQKAMAAMDGQR) are disordered.

The protein belongs to the UBALD family.

The sequence is that of UBA-like domain-containing protein 2-B (ubald2-b) from Xenopus laevis (African clawed frog).